We begin with the raw amino-acid sequence, 192 residues long: LQWLILDHNLLENSKIKGKVFSKLKQLKKLHINHNNLTESVGPLPKSLEDLQLTHNKITKLGSFDGLLNLTFVHLQHNQLKEDAVSAAFKGLKSLEYLDLSFNQMSKLPSGLPASLLTLYLDNNKISDIPDEYFKRFNGLQYLRLSHNELADSGIPGNSFNISSLVELDLSYNKLKNIPTVNENLENYYLEV.

LRR repeat units follow at residues 1 to 23 (LQWL…VFSK), 26 to 46 (QLKK…PLPK), 47 to 68 (SLED…DGLL), 69 to 90 (NLTF…AAFK), 94 to 114 (SLEY…GLPA), 115 to 136 (SLLT…YFKR), 139 to 162 (GLQY…SFNI), 164 to 185 (SLVE…NENL), and 186 to 192 (ENYYLEV).

Belongs to the small leucine-rich proteoglycan (SLRP) family. SLRP class II subfamily. As to quaternary structure, binds to laminin. Sulfated on tyrosine residue(s). Post-translationally, contains keratan sulfate.

The protein resides in the secreted. The protein localises to the extracellular space. It localises to the extracellular matrix. This chain is Lumican (LUM), found in Oryctolagus cuniculus (Rabbit).